Reading from the N-terminus, the 356-residue chain is Chorismate synthase (356 aa).

The NADP(+) site is built by Arg-44 and Arg-49. Residues 121 to 123 (HFS), Gly-278, 293 to 297 (KPTPS), and Arg-320 contribute to the FMN site.

It belongs to the chorismate synthase family. FMNH2 serves as cofactor.

It catalyses the reaction 5-O-(1-carboxyvinyl)-3-phosphoshikimate = chorismate + phosphate. Its pathway is metabolic intermediate biosynthesis; chorismate biosynthesis; chorismate from D-erythrose 4-phosphate and phosphoenolpyruvate: step 7/7. Catalyzes the anti-1,4-elimination of the C-3 phosphate and the C-6 proR hydrogen from 5-enolpyruvylshikimate-3-phosphate (EPSP) to yield chorismate, which is the branch point compound that serves as the starting substrate for the three terminal pathways of aromatic amino acid biosynthesis. This reaction introduces a second double bond into the aromatic ring system. The chain is Chorismate synthase from Thermococcus gammatolerans (strain DSM 15229 / JCM 11827 / EJ3).